Consider the following 379-residue polypeptide: Cytochrome b (379 aa).

The next 4 membrane-spanning stretches (helical) occupy residues 32 to 52, 76 to 98, 111 to 131, and 177 to 197; these read YGSL…VLAT, WLLR…LHIG, VWNI…LGYV, and FFAL…LHIF. Heme b contacts are provided by His82 and His96. Positions 181 and 195 each coordinate heme b. His200 contributes to the a ubiquinone binding site. 4 helical membrane-spanning segments follow: residues 223–243, 287–304, 320–340, and 348–367; these read YSVK…VFTL, LGGV…FLFS, LARL…WLGS, and NEVA…TMCA.

This sequence belongs to the cytochrome b family. As to quaternary structure, the main subunits of complex b-c1 are: cytochrome b, cytochrome c1 and the Rieske protein. It depends on heme b as a cofactor.

Its subcellular location is the mitochondrion inner membrane. Functionally, component of the ubiquinol-cytochrome c reductase complex (complex III or cytochrome b-c1 complex) that is part of the mitochondrial respiratory chain. The b-c1 complex mediates electron transfer from ubiquinol to cytochrome c. Contributes to the generation of a proton gradient across the mitochondrial membrane that is then used for ATP synthesis. This chain is Cytochrome b (mt:Cyt-b), found in Brachionus plicatilis (Marine rotifer).